Here is a 201-residue protein sequence, read N- to C-terminus: Arachin 25 kDa protein (201 aa).

In terms of assembly, this is one of six apparently different protein chains that constitute the peanut protein arachin.

This Arachis hypogaea (Peanut) protein is Arachin 25 kDa protein.